We begin with the raw amino-acid sequence, 344 residues long: Phosphate acyltransferase (344 aa).

Belongs to the PlsX family. In terms of assembly, homodimer. Probably interacts with PlsY.

It localises to the cytoplasm. It catalyses the reaction a fatty acyl-[ACP] + phosphate = an acyl phosphate + holo-[ACP]. It participates in lipid metabolism; phospholipid metabolism. Catalyzes the reversible formation of acyl-phosphate (acyl-PO(4)) from acyl-[acyl-carrier-protein] (acyl-ACP). This enzyme utilizes acyl-ACP as fatty acyl donor, but not acyl-CoA. In Acaryochloris marina (strain MBIC 11017), this protein is Phosphate acyltransferase.